A 244-amino-acid chain; its full sequence is Phosphoadenosine 5'-phosphosulfate reductase (244 aa).

Cys239 serves as the catalytic Nucleophile; cysteine thiosulfonate intermediate.

It belongs to the PAPS reductase family. CysH subfamily.

The protein localises to the cytoplasm. It catalyses the reaction [thioredoxin]-disulfide + sulfite + adenosine 3',5'-bisphosphate + 2 H(+) = [thioredoxin]-dithiol + 3'-phosphoadenylyl sulfate. It functions in the pathway sulfur metabolism; hydrogen sulfide biosynthesis; sulfite from sulfate: step 3/3. In terms of biological role, catalyzes the formation of sulfite from phosphoadenosine 5'-phosphosulfate (PAPS) using thioredoxin as an electron donor. The chain is Phosphoadenosine 5'-phosphosulfate reductase from Escherichia coli O157:H7.